Reading from the N-terminus, the 1073-residue chain is Receptor-type guanylate cyclase gcy-23 (1073 aa).

An N-terminal signal peptide occupies residues 1–15 (MRRELFIFLLLLGEC). Residues 16–458 (ANVKVKVGHI…FRNEKCDYTT (443 aa)) are Extracellular-facing. A glycan (N-linked (GlcNAc...) asparagine) is linked at Asn-336. Residues 459–479 (LIIGGCIVLLIILLIICFFIL) form a helical membrane-spanning segment. Over 480–1073 (SRVCENRALA…QQQNFSQLGI (594 aa)) the chain is Cytoplasmic. Residues 508–808 (MKSMLSIGSS…RVRLNTENYL (301 aa)) enclose the Protein kinase domain. A coiled-coil region spans residues 813 to 844 (SLVDQMMRMMEQYANNLEKLVAERTGMLEEAN). Positions 878-1008 (TVMFSDIVGF…DTVNVASRME (131 aa)) constitute a Guanylate cyclase domain. Residues Asp-883, Ile-884, and Asp-927 each contribute to the Mg(2+) site.

It belongs to the adenylyl cyclase class-4/guanylyl cyclase family. In terms of tissue distribution, expressed specifically in AFD sensory neurons.

The protein localises to the cell membrane. It is found in the cell projection. It localises to the cilium. The enzyme catalyses GTP = 3',5'-cyclic GMP + diphosphate. Functionally, guanylate cyclase involved in the production of the second messenger cGMP. Regulates thermotaxis responses in AFD sensory neurons. May regulate AFD neuronal activity such as calcium responses to temperature gradients. The protein is Receptor-type guanylate cyclase gcy-23 of Caenorhabditis elegans.